Consider the following 106-residue polypeptide: Small ribosomal subunit protein uS10 (106 aa).

The protein belongs to the universal ribosomal protein uS10 family. As to quaternary structure, part of the 30S ribosomal subunit.

Involved in the binding of tRNA to the ribosomes. The chain is Small ribosomal subunit protein uS10 from Prochlorococcus marinus (strain MIT 9312).